Consider the following 398-residue polypeptide: MAKLTVKDVDLKGKKVLVRVDFNVPVKDGVITNDNRITAALPTIKYIIEHGGRAVLFSHLGRVKEEADKKGKSLAPVAADLAKKLVQEVVFPGVTRGEQLEAAINALKNGEVLLVENTRFEDVDGKKESKNDPELGKYWASLGDGIFVNDAFGTAHRAHASNVGISANVDKAVAGFLLENEIAYIQEAVDNPVRPFIAILGGSKVSDKIGVIENLLKKADKVLIGGGMTYTFLKAQGIEIGDSLVEEDKLDIAKDLLAKANGKLILPVDSKEANAFADYTEVKDTEGAAVDPGFLGLDIGPKSIAKFDDELTGAKTVVWNGPMGVFENPDFQAGTIGVMDAIVKQPGVKSIIGGGDSAAAAINLGRADKFSWISTGGGASMELLEGKVLPGLAALTEK.

Substrate contacts are provided by residues 21–23 (DFN), Arg36, 59–62 (HLGR), Arg119, and Arg157. Residues Lys208, Gly296, Glu327, and 354-357 (GGDS) each bind ATP.

This sequence belongs to the phosphoglycerate kinase family. As to quaternary structure, monomer.

It localises to the cytoplasm. It catalyses the reaction (2R)-3-phosphoglycerate + ATP = (2R)-3-phospho-glyceroyl phosphate + ADP. The protein operates within carbohydrate degradation; glycolysis; pyruvate from D-glyceraldehyde 3-phosphate: step 2/5. The protein is Phosphoglycerate kinase of Streptococcus mutans serotype c (strain ATCC 700610 / UA159).